Here is a 136-residue protein sequence, read N- to C-terminus: Peptide methionine sulfoxide reductase MsrB (136 aa).

One can recognise a MsrB domain in the interval 9–136 (DAEWKALLAE…NSASLDFKPK (128 aa)). The Zn(2+) site is built by Cys53, Cys56, Cys102, and Cys105. The Nucleophile role is filled by Cys125.

Belongs to the MsrB Met sulfoxide reductase family. Zn(2+) serves as cofactor.

It carries out the reaction L-methionyl-[protein] + [thioredoxin]-disulfide + H2O = L-methionyl-(R)-S-oxide-[protein] + [thioredoxin]-dithiol. The chain is Peptide methionine sulfoxide reductase MsrB from Polaromonas sp. (strain JS666 / ATCC BAA-500).